We begin with the raw amino-acid sequence, 288 residues long: Bifunctional protein FolD (288 aa).

Residues 166–168 and isoleucine 232 each bind NADP(+); that span reads GAS.

Belongs to the tetrahydrofolate dehydrogenase/cyclohydrolase family. In terms of assembly, homodimer.

It catalyses the reaction (6R)-5,10-methylene-5,6,7,8-tetrahydrofolate + NADP(+) = (6R)-5,10-methenyltetrahydrofolate + NADPH. It carries out the reaction (6R)-5,10-methenyltetrahydrofolate + H2O = (6R)-10-formyltetrahydrofolate + H(+). It functions in the pathway one-carbon metabolism; tetrahydrofolate interconversion. Functionally, catalyzes the oxidation of 5,10-methylenetetrahydrofolate to 5,10-methenyltetrahydrofolate and then the hydrolysis of 5,10-methenyltetrahydrofolate to 10-formyltetrahydrofolate. The protein is Bifunctional protein FolD of Escherichia coli O8 (strain IAI1).